The sequence spans 263 residues: uncharacterized protein (263 aa).

31–38 (GPTGSGKT) contacts ATP.

The protein belongs to the CbbQ/NirQ/NorQ/GpvN family.

This is an uncharacterized protein from Staphylococcus haemolyticus (strain JCSC1435).